The chain runs to 567 residues: Urease subunit alpha (567 aa).

Residues 129–567 (GGIDAHIHFI…LPMAQRYFLF (439 aa)) enclose the Urease domain. Ni(2+) contacts are provided by His134, His136, and Lys217. The residue at position 217 (Lys217) is an N6-carboxylysine. Position 219 (His219) interacts with substrate. Ni(2+) is bound by residues His246 and His272. The active-site Proton donor is His320. Asp360 serves as a coordination point for Ni(2+).

It belongs to the metallo-dependent hydrolases superfamily. Urease alpha subunit family. Heterotrimer of UreA (gamma), UreB (beta) and UreC (alpha) subunits. Three heterotrimers associate to form the active enzyme. Ni cation serves as cofactor. Carboxylation allows a single lysine to coordinate two nickel ions.

The protein resides in the cytoplasm. The enzyme catalyses urea + 2 H2O + H(+) = hydrogencarbonate + 2 NH4(+). It functions in the pathway nitrogen metabolism; urea degradation; CO(2) and NH(3) from urea (urease route): step 1/1. The chain is Urease subunit alpha from Teredinibacter turnerae (strain ATCC 39867 / T7901).